Here is a 731-residue protein sequence, read N- to C-terminus: Catalase-peroxidase (731 aa).

The tract at residues 1–23 (MSDLKCPFSGHTGAVTPAGNTNN) is disordered. The segment at residues 95–218 (WHSAGTYRTG…LAAVEMGLIY (124 aa)) is a cross-link (tryptophyl-tyrosyl-methioninium (Trp-Tyr) (with M-244)). Catalysis depends on H96, which acts as the Proton acceptor. The segment at residues 218–244 (YVNPEGPHGEPDPVASGRDVRETFARM) is a cross-link (tryptophyl-tyrosyl-methioninium (Tyr-Met) (with W-95)). H259 contributes to the heme b binding site.

The protein belongs to the peroxidase family. Peroxidase/catalase subfamily. As to quaternary structure, homodimer or homotetramer. Heme b serves as cofactor. Formation of the three residue Trp-Tyr-Met cross-link is important for the catalase, but not the peroxidase activity of the enzyme.

The catalysed reaction is H2O2 + AH2 = A + 2 H2O. It carries out the reaction 2 H2O2 = O2 + 2 H2O. Functionally, bifunctional enzyme with both catalase and broad-spectrum peroxidase activity. This chain is Catalase-peroxidase, found in Synechococcus sp. (strain WH7803).